The following is a 304-amino-acid chain: Methionyl-tRNA formyltransferase (304 aa).

106 to 109 contacts (6S)-5,6,7,8-tetrahydrofolate; the sequence is SLLP.

It belongs to the Fmt family.

It catalyses the reaction L-methionyl-tRNA(fMet) + (6R)-10-formyltetrahydrofolate = N-formyl-L-methionyl-tRNA(fMet) + (6S)-5,6,7,8-tetrahydrofolate + H(+). Functionally, attaches a formyl group to the free amino group of methionyl-tRNA(fMet). The formyl group appears to play a dual role in the initiator identity of N-formylmethionyl-tRNA by promoting its recognition by IF2 and preventing the misappropriation of this tRNA by the elongation apparatus. This Thermosipho africanus (strain TCF52B) protein is Methionyl-tRNA formyltransferase.